The chain runs to 276 residues: Shikimate dehydrogenase (NADP(+)) (276 aa).

Shikimate is bound by residues 20-22 (SRS) and threonine 67. Catalysis depends on lysine 71, which acts as the Proton acceptor. Aspartate 83 serves as a coordination point for NADP(+). Shikimate contacts are provided by asparagine 92 and aspartate 107. NADP(+) contacts are provided by residues 131-135 (GAGGA) and isoleucine 217. Position 219 (tyrosine 219) interacts with shikimate. An NADP(+)-binding site is contributed by glycine 240.

It belongs to the shikimate dehydrogenase family. Homodimer.

The catalysed reaction is shikimate + NADP(+) = 3-dehydroshikimate + NADPH + H(+). It participates in metabolic intermediate biosynthesis; chorismate biosynthesis; chorismate from D-erythrose 4-phosphate and phosphoenolpyruvate: step 4/7. Functionally, involved in the biosynthesis of the chorismate, which leads to the biosynthesis of aromatic amino acids. Catalyzes the reversible NADPH linked reduction of 3-dehydroshikimate (DHSA) to yield shikimate (SA). The chain is Shikimate dehydrogenase (NADP(+)) from Acidiphilium cryptum (strain JF-5).